Reading from the N-terminus, the 197-residue chain is Putative double homeobox protein 3 (197 aa).

DNA-binding regions (homeobox) lie at residues 46–105 (GRRM…LRQH) and 121–180 (GRRK…WGQS). Residues 102–127 (LRQHRRQSRPWPGRRDPQKGRRKRTA) form a disordered region.

The protein belongs to the paired homeobox family. Expressed in hepatoma Hep3B cells.

The protein localises to the nucleus. In Homo sapiens (Human), this protein is Putative double homeobox protein 3 (DUX3).